The sequence spans 21 residues: Peptide PGLa-BM2 (21 aa).

Ala-21 carries the post-translational modification Alanine amide.

In terms of tissue distribution, expressed by the skin glands.

It is found in the secreted. Its function is as follows. Antimicrobial peptide. The sequence is that of Peptide PGLa-BM2 from Xenopus boumbaensis (Mawa clawed frog).